We begin with the raw amino-acid sequence, 934 residues long: Protocadherin gamma-C3 (934 aa).

A signal peptide spans 1–31 (MVPEAWRSGLVSTGRVVGVLLLLGALNKAST). Cadherin domains lie at 32-135 (VIHY…NPAF), 136-244 (PTQE…APVF), 245-352 (NQSL…APEI), 353-457 (TVTS…PPQS), 458-567 (SQSS…APQV), and 572-685 (PGGS…APRE). Over 32 to 693 (VIHYEIPEER…REQNKNLTFY (662 aa)) the chain is Extracellular. 6 N-linked (GlcNAc...) asparagine glycosylation sites follow: Asn245, Asn424, Asn478, Asn550, Asn615, and Asn689. The helical transmembrane segment at 694–714 (LLLSLILVSVGFVVTVFGVII) threads the bilayer. At 715 to 934 (FKVYKWKQSR…KKKSGKKEKK (220 aa)) the chain is on the cytoplasmic side. Disordered regions lie at residues 804–843 (ESAP…WPNN) and 904–934 (ATLT…KEKK). A compositionally biased stretch (polar residues) spans 812 to 843 (APPNTDWRFSQAQRPGTSGSQNGDDTGTWPNN). The span at 924 to 934 (NKKKSGKKEKK) shows a compositional bias: basic residues.

It localises to the cell membrane. Potential calcium-dependent cell-adhesion protein. May be involved in the establishment and maintenance of specific neuronal connections in the brain. The polypeptide is Protocadherin gamma-C3 (PCDHGC3) (Pan troglodytes (Chimpanzee)).